The chain runs to 268 residues: Large ribosomal subunit protein mL46 (268 aa).

A mitochondrion-targeting transit peptide spans 1 to 25 (MYLKRNIINMQRSFSRQFHISVRNS).

Belongs to the mitochondrion-specific ribosomal protein mL46 family. As to quaternary structure, component of the mitochondrial large ribosomal subunit (mt-LSU). Mature yeast 74S mitochondrial ribosomes consist of a small (37S) and a large (54S) subunit. The 37S small subunit contains a 15S ribosomal RNA (15S mt-rRNA) and at least 32 different proteins. The 54S large subunit contains a 21S rRNA (21S mt-rRNA) and at least 45 different proteins.

Its subcellular location is the mitochondrion. Its function is as follows. Component of the mitochondrial ribosome (mitoribosome), a dedicated translation machinery responsible for the synthesis of mitochondrial genome-encoded proteins, including at least some of the essential transmembrane subunits of the mitochondrial respiratory chain. The mitoribosomes are attached to the mitochondrial inner membrane and translation products are cotranslationally integrated into the membrane. This Schizosaccharomyces pombe (strain 972 / ATCC 24843) (Fission yeast) protein is Large ribosomal subunit protein mL46 (mrpl17).